Consider the following 293-residue polypeptide: NAD kinase (293 aa).

The active-site Proton acceptor is the Asp72. NAD(+)-binding positions include 72–73 (DG), 146–147 (ND), Arg157, Lys174, Asp176, 187–192 (TAYALS), and Gln247.

Belongs to the NAD kinase family. A divalent metal cation is required as a cofactor.

Its subcellular location is the cytoplasm. The enzyme catalyses NAD(+) + ATP = ADP + NADP(+) + H(+). Involved in the regulation of the intracellular balance of NAD and NADP, and is a key enzyme in the biosynthesis of NADP. Catalyzes specifically the phosphorylation on 2'-hydroxyl of the adenosine moiety of NAD to yield NADP. This chain is NAD kinase, found in Marinomonas sp. (strain MWYL1).